A 964-amino-acid polypeptide reads, in one-letter code: SKI family transcriptional corepressor 1 (964 aa).

6 disordered regions span residues 45–72, 278–365, 414–461, 525–587, 610–768, and 794–842; these read TQLG…SSAL, RTFS…GGSA, AGEP…WGHQ, AGGG…RKSS, REAY…GAAK, and LCTP…EDGL. A compositionally biased stretch (gly residues) spans 283–310; the sequence is QGGGGGGANSGSGGAGKGGAGGGGGPGC. A compositionally biased stretch (low complexity) spans 345–355; sequence ALGLAAAASGP. Gly residues-rich tracts occupy residues 356-365 and 417-440; these read AGPGGPGGSA and PKGG…GPGA. Residues 571–583 are compositionally biased toward pro residues; that stretch reads SLGPLPPPPPPPA. Over residues 652-661 the composition is skewed to acidic residues; sequence DTADEPEVDV. The span at 798–808 shows a compositional bias: basic and acidic residues; sequence ETHEPDKEDNH. Over residues 823–834 the composition is skewed to polar residues; sequence DQRSVSQPSPAN. Residues 853 to 921 are a coiled coil; that stretch reads EKDIENLARE…DTLCNELDQE (69 aa).

It belongs to the SKI family. In terms of assembly, interacts with SMAD1, SMAD2 and SMAD3. Interacts with LBX1. Expressed in brain with higher levels in embryo than adult. Expressed by migratory precursors of Purkinje cells in the postnatal brain. Also expressed in adult testis.

The protein localises to the nucleus. Its function is as follows. Inhibits BMP signaling. Acts as a transcriptional corepressor of LBX1. The sequence is that of SKI family transcriptional corepressor 1 (Skor1) from Mus musculus (Mouse).